Consider the following 283-residue polypeptide: Pantothenate synthetase 1 (283 aa).

Residue 30 to 37 (MGYLHDGH) coordinates ATP. His-37 functions as the Proton donor in the catalytic mechanism. Gln-61 is a (R)-pantoate binding site. Gln-61 lines the beta-alanine pocket. 147–150 (GQKD) lines the ATP pocket. Gln-153 is a (R)-pantoate binding site. ATP-binding positions include Val-176 and 184 to 187 (MSSR).

Belongs to the pantothenate synthetase family. In terms of assembly, homodimer.

The protein localises to the cytoplasm. The catalysed reaction is (R)-pantoate + beta-alanine + ATP = (R)-pantothenate + AMP + diphosphate + H(+). The protein operates within cofactor biosynthesis; (R)-pantothenate biosynthesis; (R)-pantothenate from (R)-pantoate and beta-alanine: step 1/1. Catalyzes the condensation of pantoate with beta-alanine in an ATP-dependent reaction via a pantoyl-adenylate intermediate. In Bradyrhizobium diazoefficiens (strain JCM 10833 / BCRC 13528 / IAM 13628 / NBRC 14792 / USDA 110), this protein is Pantothenate synthetase 1.